Consider the following 372-residue polypeptide: Glutamate 5-kinase (372 aa).

K14 is an ATP binding site. Positions 54, 141, and 153 each coordinate substrate. T173–D174 lines the ATP pocket. The PUA domain maps to R280–M358.

Belongs to the glutamate 5-kinase family.

It is found in the cytoplasm. It carries out the reaction L-glutamate + ATP = L-glutamyl 5-phosphate + ADP. The protein operates within amino-acid biosynthesis; L-proline biosynthesis; L-glutamate 5-semialdehyde from L-glutamate: step 1/2. Functionally, catalyzes the transfer of a phosphate group to glutamate to form L-glutamate 5-phosphate. The chain is Glutamate 5-kinase from Pseudomonas syringae pv. tomato (strain ATCC BAA-871 / DC3000).